The chain runs to 212 residues: Ras-related protein Rab-2A (212 aa).

Alanine 2 bears the N-acetylalanine mark. The required for interaction with PRKCI stretch occupies residues 2–19; sequence AYAYLFKYIIIGDTGVGK. Residues glycine 16, valine 17, glycine 18, lysine 19, serine 20, cysteine 21, and threonine 38 each contribute to the GTP site. Serine 20 contributes to the Mg(2+) binding site. A Switch 1 motif is present at residues 37-42; the sequence is LTIGVE. Residues threonine 38 and aspartate 61 each coordinate Mg(2+). The short motif at 63–72 is the Switch 2 element; that stretch reads AGQESFRSIT. GTP contacts are provided by glycine 64, asparagine 119, lysine 120, aspartate 122, alanine 150, and lysine 151. 2 S-geranylgeranyl cysteine lipidation sites follow: cysteine 211 and cysteine 212.

Belongs to the small GTPase superfamily. Rab family. Interacts with PRKCI. Interacts with TRIP11. Interacts (in GTP-bound form) with GARIN1B. Interacts (GTP-bound) with HOPS complex component VPS39; interaction contributes to obtaining a functional HOPS complex that promotes autophagosome-lysosome membrane fusion driven by STX17-SNAP29-VAMP8. May interact with VPS41. Requires Mg(2+) as cofactor. Post-translationally, prenylated. Prenylation is required for association with cellular membranes.

Its subcellular location is the endoplasmic reticulum-Golgi intermediate compartment membrane. The protein localises to the melanosome. It is found in the endoplasmic reticulum membrane. It localises to the golgi apparatus membrane. The protein resides in the cytoplasmic vesicle. Its subcellular location is the secretory vesicle. The protein localises to the acrosome. It is found in the autophagosome membrane. It carries out the reaction GTP + H2O = GDP + phosphate + H(+). Its activity is regulated as follows. Regulated by guanine nucleotide exchange factors (GEFs) which promote the exchange of bound GDP for free GTP, GTPase activating proteins (GAPs) which increase the GTP hydrolysis activity, and GDP dissociation inhibitors (GDIs) which inhibit the dissociation of the nucleotide from the GTPase. The small GTPases Rab are key regulators of intracellular membrane trafficking, from the formation of transport vesicles to their fusion with membranes. Rabs cycle between active GTP-bound and inactive GDP-bound states. In their active state, drive transport of vesicular carriers from donor organelles to acceptor organelles to regulate the membrane traffic that maintains organelle identity and morphology. RAB2A regulates autophagy by promoting autophagosome-lysosome fusion via recruitment of the HOPS endosomal tethering complex; this process involves autophagosomal RAB2A and lysosomal RAB39A recruitment of HOPS subcomplexes VPS39-VPS11 and VPS41-VPS16-VPS18-VPS33A, respectively, which assemble into a functional complex to mediate membrane tethering and SNAREs-driven membrane fusion. Required for protein transport from the endoplasmic reticulum to the Golgi complex. Regulates the compacted morphology of the Golgi. Together with RAB2B, redundantly required for efficient autophagic flux. The sequence is that of Ras-related protein Rab-2A (RAB2A) from Canis lupus familiaris (Dog).